Here is a 118-residue protein sequence, read N- to C-terminus: Large ribosomal subunit protein bL20 (118 aa).

Belongs to the bacterial ribosomal protein bL20 family.

Functionally, binds directly to 23S ribosomal RNA and is necessary for the in vitro assembly process of the 50S ribosomal subunit. It is not involved in the protein synthesizing functions of that subunit. This Pseudomonas fluorescens (strain SBW25) protein is Large ribosomal subunit protein bL20.